A 405-amino-acid chain; its full sequence is MADVKKVVLAYSGGLDTSVILKWLQDTYNCEVVTFTADLGQGEEVEPARAKARAMGVKEIYIDDLREEFVRDFVYPMFRANTVYEGEYLLGTSIARPLIAKRLIEIANETGADAISHGATGKGNDQVRFELGAYALKPGVKVIAPWREWDLLSREKLMDYAEKHGIPIERHGKKKSPYSMDANLLHISYEGGVLEDTWTEHEEDMWKWTASPENAPDTPTYIELTYRKGDIVAIDGKDMTPAEVLTELNRVGGINGIGRLDIVENRYVGMKSRGCYETPGGTIMLKAHRAIESITLDREVAHLKDELMPKYASLIYTGYWWSPERLMLQQMIDASQVNVNGVVRLKLYKGNVVVVGRKSDDSLFDANIATFEEDGGAYNQADAAGFIKLNALRMRIAANKGRTLS.

Residues 10-18 (AYSGGLDTS) and Ala-37 contribute to the ATP site. L-citrulline contacts are provided by Tyr-88 and Ser-93. Gly-118 is a binding site for ATP. 3 residues coordinate L-aspartate: Thr-120, Asn-124, and Asp-125. Residue Asn-124 coordinates L-citrulline. L-citrulline contacts are provided by Arg-128, Ser-179, Ser-188, Glu-264, and Tyr-276.

This sequence belongs to the argininosuccinate synthase family. Type 1 subfamily. In terms of assembly, homotetramer.

It localises to the cytoplasm. It catalyses the reaction L-citrulline + L-aspartate + ATP = 2-(N(omega)-L-arginino)succinate + AMP + diphosphate + H(+). The protein operates within amino-acid biosynthesis; L-arginine biosynthesis; L-arginine from L-ornithine and carbamoyl phosphate: step 2/3. The sequence is that of Argininosuccinate synthase from Pseudomonas aeruginosa (strain LESB58).